The primary structure comprises 500 residues: Keratin, type II cuticular Hb1 (500 aa).

Residues 1-106 (MTCGSGFRGR…PNAQCVKQEE (106 aa)) are head. Residues 106 to 417 (EKEQIKCLNN…RLLEGEEQRL (312 aa)) form the IF rod domain. Residues 107 to 141 (KEQIKCLNNRFAAFIDKVRFLEQQNKLLETKLQFY) are coil 1A. Positions 142–151 (QNRQCCESNL) are linker 1. Positions 152 to 252 (EPLFNGYIET…YEEEIRVLQA (101 aa)) are coil 1B. Lysine 212 participates in a covalent cross-link: Glycyl lysine isopeptide (Lys-Gly) (interchain with G-Cter in SUMO1). Residues 253–269 (HISDTSVIVKMDNSRDL) are linker 12. The tract at residues 270-413 (NMDNIVAEIK…ATYRRLLEGE (144 aa)) is coil 2. Residues 414–500 (EQRLCEGVGS…GSCASVCRKC (87 aa)) are tail.

This sequence belongs to the intermediate filament family. In terms of assembly, heterotetramer of two type I and two type II keratins.

This chain is Keratin, type II cuticular Hb1, found in Bos taurus (Bovine).